The sequence spans 794 residues: Signal transducer and activator of transcription 5A (794 aa).

Tyrosine 90 is subject to Phosphotyrosine. Serine 128 bears the Phosphoserine mark. Residues 589–686 (WNDGAILGFV…EVFSKYYTPV (98 aa)) enclose the SH2 domain. Tyrosine 682 carries the phosphotyrosine modification. Residue tyrosine 694 is modified to Phosphotyrosine; by JAK2. The interval 771–794 (PMDSLEPSLPPPTGLFTPGRGSLS) is disordered.

Belongs to the transcription factor STAT family. Forms a homodimer or a heterodimer with a related family member. Binds NR3C1. Interacts with NCOA1 and SOCS7. Interacts with ERBB4. Interacts with EBF4. Interacts with CD69. Post-translationally, ISGylated. In terms of processing, tyrosine phosphorylated in response to KITLG/SCF, IL2, IL3, IL7, IL15, CSF2/GMCSF, GH1, PRL, EPO and THPO. Activated KIT promotes phosphorylation on tyrosine residues and subsequent translocation to the nucleus. Tyrosine phosphorylated in response to constitutively activated FGFR1, FGFR2, FGFR3 and FGFR4. Tyrosine phosphorylation is required for DNA-binding activity and dimerization. Serine phosphorylation is also required for maximal transcriptional activity. Tyrosine phosphorylated in response to signaling via activated FLT3; wild-type FLT3 results in much weaker phosphorylation than constitutively activated mutant FLT3. Alternatively, can be phosphorylated by JAK2 at Tyr-694.

Its subcellular location is the cytoplasm. It localises to the nucleus. Functionally, carries out a dual function: signal transduction and activation of transcription. Mediates cellular responses to the cytokine KITLG/SCF and other growth factors. May mediate cellular responses to activated FGFR1, FGFR2, FGFR3 and FGFR4. Binds to the GAS element and activates PRL-induced transcription. Regulates the expression of milk proteins during lactation. The sequence is that of Signal transducer and activator of transcription 5A (STAT5A) from Bos taurus (Bovine).